The following is a 228-amino-acid chain: UPF0173 metal-dependent hydrolase Dred_1740 (228 aa).

This sequence belongs to the UPF0173 family.

The chain is UPF0173 metal-dependent hydrolase Dred_1740 from Desulforamulus reducens (strain ATCC BAA-1160 / DSM 100696 / MI-1) (Desulfotomaculum reducens).